A 121-amino-acid polypeptide reads, in one-letter code: MSITKDQILEALAEMSVMEVVELIEAMEEKFGVSAAAAVVSGGADAGAAEEQTEFDVILTSHGDNKVATIKALRAATGLGLKEAKGMAESAPVAVKEAITKEEAEALKTDLEAAGAAVEIK.

This sequence belongs to the bacterial ribosomal protein bL12 family. Homodimer. Part of the ribosomal stalk of the 50S ribosomal subunit. Forms a multimeric L10(L12)X complex, where L10 forms an elongated spine to which 2 to 4 L12 dimers bind in a sequential fashion. Binds GTP-bound translation factors.

In terms of biological role, forms part of the ribosomal stalk which helps the ribosome interact with GTP-bound translation factors. Is thus essential for accurate translation. This Shewanella piezotolerans (strain WP3 / JCM 13877) protein is Large ribosomal subunit protein bL12.